The chain runs to 457 residues: MSDNPEMKPHGTSKEIVESVTDATSKAIDKLQEELHKDASESVTPVTKESTAATKESRKYNFFIRTVWTFVMISGFFITLASGHAWCIVLILGCQIATFKECIAVTSASGREKNLPLTKTLNWYLLFTTIYYLDGKSLFKFFQATFYEYPVLNFIVTNHKFICYCLYLMGFVLFVCSLRKGFLKFQFGSLCVTHMVLLLVVFQAHLIIKNVLNGLFWFLLPCGLVIVNDIFAYLCGITFGKTKLIEISPKKTLEGFLGAWFFTALASIILTRILSPYTYLTCPVEDLHTNFFSNLTCELNPVFLPQVYRLPPIFFDKVQINSITVKPIYFHALNLATFASLFAPFGGFFASGLKRTFKVKDFGHSIPGHGGITDRVDCQFIMGSFANLYYETFISEHRITVDTVLSTILMNLNDKQIIELIDILIRFLSKKGIISAKNFEKLADIFNVTKKSLTNHS.

Helical transmembrane passes span 71–91 (VMISGFFITLASGHAWCIVLI), 154–174 (FIVTNHKFICYCLYLMGFVLF), 188–208 (GSLCVTHMVLLLVVFQAHLII), 214–234 (GLFWFLLPCGLVIVNDIFAYL), 255–275 (GFLGAWFFTALASIILTRILS), and 330–350 (FHALNLATFASLFAPFGGFFA).

Belongs to the CDS family. Homodimer. The cofactor is Mg(2+).

The protein localises to the endoplasmic reticulum membrane. The protein resides in the cytoplasmic vesicle. It localises to the secretory vesicle. It carries out the reaction a 1,2-diacyl-sn-glycero-3-phosphate + CTP + H(+) = a CDP-1,2-diacyl-sn-glycerol + diphosphate. It functions in the pathway phospholipid metabolism; CDP-diacylglycerol biosynthesis; CDP-diacylglycerol from sn-glycerol 3-phosphate: step 3/3. Its function is as follows. Supplies CDP-diacylglycerol, which may play an important role as both a precursor to phosphoinositide biosynthesis in the plasma membrane and as a negative effector of phosphatidylinositol 4-kinase activity, thereby exerting an effect on cell proliferation via a lipid-dependent signal transduction cascade. The protein is Phosphatidate cytidylyltransferase (CDS1) of Saccharomyces cerevisiae (strain ATCC 204508 / S288c) (Baker's yeast).